We begin with the raw amino-acid sequence, 1848 residues long: Histone-lysine N-methyltransferase, H3 lysine-79 specific (1848 aa).

A DOT1 domain is found at 19–336; that stretch reads DVISFAWPLQ…ILERYFQRLK (318 aa). Residues 142 to 145, 165 to 174, E192, and 228 to 229 each bind S-adenosyl-L-methionine; these read YGET, FIDLGSGVGQ, and DF. Disordered stretches follow at residues 338–537, 558–593, 886–908, 960–996, 1033–1075, 1165–1190, 1221–1333, 1345–1374, 1432–1463, 1486–1508, 1529–1559, 1573–1604, 1637–1713, and 1731–1757; these read KGGN…TRKA, AVSVPSKESSSKEDPPRAASAGPGRKGRMKKGARGR, LNSVKNSRRNREHRARSQEWPEV, PPPATAPVSIKSSPGHHYKDTTLMPAPKQQQQQQMTL, LNED…AQSL, HMASLYPAGQQTTPADLGYQRRRSSV, QRQQ…TQVS, QEKLSQHVTPQATPPLPGHGGAPTSGKTIG, VHVRPLSEESQDPQPTSYAQERGPGLGAGGAA, ARANAGTAPPATHSSSARSGRDY, EQQQKQSKGAGSAGSSSLRGPRLNGANPPLE, KYKEETEERQRRAAAAASSSAGPPAGMELPTH, SPLA…VDPP, and QLSHHQQQQQQMLHHHQSQQQQHLQLT. Residues 339–360 are compositionally biased toward basic and acidic residues; that stretch reads GGNDHESVGTVRTTRDRAKREA. Basic residues predominate over residues 364–373; it reads QHHHNNHHSN. The segment covering 391 to 405 has biased composition (low complexity); that stretch reads ATATAAHQQRHQSQS. Residues 419 to 428 are compositionally biased toward polar residues; sequence SGQQAASKTR. Low complexity-rich tracts occupy residues 429 to 439 and 453 to 474; these read QQLQHQHNQQQ and DATNGNGGNTTTATNTTSASNG. Phosphoserine occurs at positions 491, 492, and 494. Positions 507–518 are enriched in gly residues; the sequence is GSNGGSIGGGSV. Composition is skewed to basic residues over residues 526–535 and 582–593; these read TQKKRKKLTR and RKGRMKKGARGR. The segment covering 1221-1235 has biased composition (low complexity); sequence QRQQMRVEEQQQQQQ. Over residues 1236-1263 the composition is skewed to basic residues; it reads HQHHHHHHHHHPQHRLPQHVQHQHPHQH. Residues 1289-1300 show a composition bias toward low complexity; that stretch reads EPPQTQPLELLP. Residues S1318, S1324, and S1325 each carry the phosphoserine modification. Residues 1532–1545 show a composition bias toward low complexity; that stretch reads QKQSKGAGSAGSSS. Residues 1574-1583 are compositionally biased toward basic and acidic residues; it reads YKEETEERQR. Low complexity-rich tracts occupy residues 1585–1598 and 1681–1696; these read AAAAASSSAGPPAG and HDATTPSPTPSSSSSS. Residues 1697–1706 are compositionally biased toward polar residues; it reads CGRRSNSNNG.

It belongs to the class I-like SAM-binding methyltransferase superfamily. DOT1 family. In terms of tissue distribution, broadly expressed in most tissues. Expressed in a large subset of neurons and in a small subset of glial cells.

It localises to the nucleus. It catalyses the reaction L-lysyl(79)-[histone H3] + 3 S-adenosyl-L-methionine = N(6),N(6),N(6)-trimethyl-L-lysyl(79)-[histone H3] + 3 S-adenosyl-L-homocysteine + 3 H(+). In terms of biological role, histone methyltransferase. Methylates 'Lys-79' of histone H3. Required for Polycomb Group (PcG) and trithorax Group (trxG) maintenance of expression. Also involved in telomeric silencing but do not in centric heterochromatin. Probably participates in pairing sensitivity. The sequence is that of Histone-lysine N-methyltransferase, H3 lysine-79 specific (gpp) from Drosophila melanogaster (Fruit fly).